The sequence spans 808 residues: MLVSYQWLKQYVDLDGISAEEVAEKLTRGGIEVDIIHDLNQGATGVVVGHVLECRQHPNADKLNLCQVEIGEEEPVQIVCGAPNVAAGQKVAVAKVGAVLPGNFKIKKAKLRGELSQGMICSLQELGVENKFVQKEFADGIYVFSDDVEIGSDALEALNRYDQVLELDLTPNRSDCLNMYGVAYEVAALFDKEVHWPTAESSGTDGQASDYVSVEIEDIEKNPYYGATIIKNVKVGPSPLWLQNRLIAAGIRPISNVVDVTNYVLLEYGQPLHAFDYDRLGSNKVVTRLAKEGEKMVTLDDVERTLQADHLLITNGRDPVAIAGVMGGATSEVQEDTTTVLLEAAYFDPATVRKASRDLGLRSDSSSRFEKGVDPKRVREAAARAATLIAEVAGGTVVGGVVEAGELAIEEPVVSLNLPHMNQRLGMELSHDEVAAIFDRLGFAYTVENDTFEVTAPSRRGDIRIEEDLFEEVARLYGYDNIPTTFPVGGTTRGGLTDYQQKRRKIRRYLEGAGLFEVMTYSLTSEEKEKGLQGENEDYLPIRVAMPMSEERSTMRTSLVPHLLDVVQYNLNRKQEALFIYELGSVFLSKEETLTKQPEEREMLAGALTGFWTEHLWQGEKKAVDFFVVKGILEGMFAELGLSEKVTFERGEQPGMHPGRTANVKVNGRAVGFAGQIHPERQSELDLKETYVFQLDVESLLTEEGTEVAYEPLPRFPAISRDIALVVDENVTAAQLQQVIEANGGEWLKHVYLFDLYEGEHMEAGKKSIAFSLTYFDPERTLTDEEVTAVHEQILKELEASTGAVLRG.

One can recognise a tRNA-binding domain in the interval 40 to 155 (NQGATGVVVG…DDVEIGSDAL (116 aa)). The 76-residue stretch at 409–484 (IEEPVVSLNL…RLYGYDNIPT (76 aa)) folds into the B5 domain. Mg(2+) is bound by residues aspartate 462, aspartate 468, glutamate 471, and glutamate 472. An FDX-ACB domain is found at 714–807 (PRFPAISRDI…LEASTGAVLR (94 aa)).

Belongs to the phenylalanyl-tRNA synthetase beta subunit family. Type 1 subfamily. In terms of assembly, tetramer of two alpha and two beta subunits. The cofactor is Mg(2+).

Its subcellular location is the cytoplasm. The catalysed reaction is tRNA(Phe) + L-phenylalanine + ATP = L-phenylalanyl-tRNA(Phe) + AMP + diphosphate + H(+). In Halalkalibacterium halodurans (strain ATCC BAA-125 / DSM 18197 / FERM 7344 / JCM 9153 / C-125) (Bacillus halodurans), this protein is Phenylalanine--tRNA ligase beta subunit (pheT).